The primary structure comprises 142 residues: VapC ribonuclease R02377 (142 aa).

One can recognise a PINc domain in the interval 3-140; the sequence is FVDGSVIVAI…YKGNDFSQTD (138 aa). The Mg(2+) site is built by Asp5 and Asp115.

The protein belongs to the PINc/VapC protein family. Requires Mg(2+) as cofactor.

Toxic component of a type II toxin-antitoxin (TA) system. An RNase. The chain is VapC ribonuclease R02377 from Rhizobium meliloti (strain 1021) (Ensifer meliloti).